Here is a 181-residue protein sequence, read N- to C-terminus: ATP synthase subunit delta (181 aa).

It belongs to the ATPase delta chain family. As to quaternary structure, F-type ATPases have 2 components, F(1) - the catalytic core - and F(0) - the membrane proton channel. F(1) has five subunits: alpha(3), beta(3), gamma(1), delta(1), epsilon(1). F(0) has three main subunits: a(1), b(2) and c(10-14). The alpha and beta chains form an alternating ring which encloses part of the gamma chain. F(1) is attached to F(0) by a central stalk formed by the gamma and epsilon chains, while a peripheral stalk is formed by the delta and b chains.

It is found in the cell membrane. Its function is as follows. F(1)F(0) ATP synthase produces ATP from ADP in the presence of a proton or sodium gradient. F-type ATPases consist of two structural domains, F(1) containing the extramembraneous catalytic core and F(0) containing the membrane proton channel, linked together by a central stalk and a peripheral stalk. During catalysis, ATP synthesis in the catalytic domain of F(1) is coupled via a rotary mechanism of the central stalk subunits to proton translocation. Functionally, this protein is part of the stalk that links CF(0) to CF(1). It either transmits conformational changes from CF(0) to CF(1) or is implicated in proton conduction. The polypeptide is ATP synthase subunit delta (Mycoplasmoides gallisepticum (strain R(low / passage 15 / clone 2)) (Mycoplasma gallisepticum)).